The sequence spans 62 residues: Phospholipase A2 superbin a (62 aa).

Ca(2+)-binding residues include Y28, G30, and G32. A disulfide bridge links C29 with C45. Residue H48 is part of the active site. D49 serves as a coordination point for Ca(2+).

Requires Ca(2+) as cofactor. Expressed by the venom gland.

It localises to the secreted. It catalyses the reaction a 1,2-diacyl-sn-glycero-3-phosphocholine + H2O = a 1-acyl-sn-glycero-3-phosphocholine + a fatty acid + H(+). Functionally, snake venom phospholipase A2 (PLA2) that inhibits collagen-induced platelet aggregation. In terms of inhibition of platelet aggregation, superbin a is more potent as superbin b, c, and d. PLA2 catalyzes the calcium-dependent hydrolysis of the 2-acyl groups in 3-sn-phosphoglycerides. This is Phospholipase A2 superbin a from Austrelaps superbus (Lowland copperhead snake).